Here is a 739-residue protein sequence, read N- to C-terminus: POU domain, class 2, transcription factor 1 (739 aa).

The segment covering 1–11 (MNNPSETSKPS) has biased composition (polar residues). Disordered regions lie at residues 1 to 39 (MNNP…GGPI), 67 to 95 (SLNV…SVQA), 253 to 277 (TPIQ…EEPS), 353 to 378 (DSTL…RRKK), and 489 to 553 (SVTG…SSPL). Residues 81–95 (SQQPSQPSQQPSVQA) show a composition bias toward low complexity. The POU-specific domain occupies 274 to 348 (EEPSDLEELE…LLEKWLNDAE (75 aa)). Residues 353–364 (DSTLSSPSALNS) show a composition bias toward low complexity. A DNA-binding region (homeobox) is located at residues 375–434 (RRKKRTSIETNIRVALEKSFLENQKPTSEEITMIADQLNMEKEVIRVWFCNRRQKEKRIN). The span at 489-552 (SVTGTTETTS…QTTSTPLSSP (64 aa)) shows a compositional bias: low complexity.

This sequence belongs to the POU transcription factor family. Class-2 subfamily. As to quaternary structure, interacts with NR3C1, AR and PGR.

It localises to the nucleus. Functionally, transcription factor that binds to the octamer motif (5'-ATTTGCAT-3') and activates the promoters of the genes for some small nuclear RNAs (snRNA) and of genes such as those for histone H2B and immunoglobulins. Modulates transcription transactivation by NR3C1, AR and PGR. This is POU domain, class 2, transcription factor 1 (POU2F1) from Gallus gallus (Chicken).